A 585-amino-acid chain; its full sequence is Probable long-chain-fatty-acid--AMP ligase FadD30 (585 aa).

It belongs to the ATP-dependent AMP-binding enzyme family.

The protein operates within lipid metabolism; fatty acid biosynthesis. Functionally, catalyzes the activation of long-chain fatty acids as acyl-adenylates (acyl-AMP), which are then transferred to a multifunctional polyketide synthase (PKS) for further chain extension. The sequence is that of Probable long-chain-fatty-acid--AMP ligase FadD30 (fadD30) from Mycobacterium tuberculosis (strain CDC 1551 / Oshkosh).